The primary structure comprises 235 residues: tRNA (guanine-N(1)-)-methyltransferase (235 aa).

Residues G112 and I132–I137 contribute to the S-adenosyl-L-methionine site.

This sequence belongs to the RNA methyltransferase TrmD family. Homodimer.

Its subcellular location is the cytoplasm. It carries out the reaction guanosine(37) in tRNA + S-adenosyl-L-methionine = N(1)-methylguanosine(37) in tRNA + S-adenosyl-L-homocysteine + H(+). Its function is as follows. Specifically methylates guanosine-37 in various tRNAs. In Anaplasma marginale (strain Florida), this protein is tRNA (guanine-N(1)-)-methyltransferase.